The chain runs to 724 residues: 4-alpha-glucanotransferase (724 aa).

This sequence belongs to the disproportionating enzyme family.

The protein resides in the cytoplasm. The enzyme catalyses Transfers a segment of a (1-&gt;4)-alpha-D-glucan to a new position in an acceptor, which may be glucose or a (1-&gt;4)-alpha-D-glucan.. This is 4-alpha-glucanotransferase (malQ) from Mycobacterium bovis (strain ATCC BAA-935 / AF2122/97).